The following is a 295-amino-acid chain: Large ribosomal subunit protein uL2 (295 aa).

The segment at W243–S295 is disordered. Over residues D256 to V287 the composition is skewed to basic and acidic residues.

The protein belongs to the universal ribosomal protein uL2 family. As to quaternary structure, part of the 50S ribosomal subunit. Forms a bridge to the 30S subunit in the 70S ribosome.

Functionally, one of the primary rRNA binding proteins. Required for association of the 30S and 50S subunits to form the 70S ribosome, for tRNA binding and peptide bond formation. It has been suggested to have peptidyltransferase activity; this is somewhat controversial. Makes several contacts with the 16S rRNA in the 70S ribosome. This is Large ribosomal subunit protein uL2 from Aquifex pyrophilus.